Consider the following 461-residue polypeptide: Ubiquinone hydroxylase UbiM (461 aa).

It belongs to the UbiH/COQ6 family. The cofactor is FAD.

The enzyme catalyses a 2-(all-trans-polyprenyl)phenol + NADPH + O2 + H(+) = a 3-(all-trans-polyprenyl)benzene-1,2-diol + NADP(+) + H2O. The catalysed reaction is a 5-methoxy-2-methyl-3-(all-trans-polyprenyl)benzene-1,4-diol + AH2 + O2 = a 3-demethylubiquinol + A + H2O. Its pathway is cofactor biosynthesis; ubiquinone biosynthesis. Catalyzes the hydroxylation of three positions of the aromatic ring during ubiquinone biosynthesis. This is Ubiquinone hydroxylase UbiM from Neisseria meningitidis serogroup C / serotype 2a (strain ATCC 700532 / DSM 15464 / FAM18).